The sequence spans 549 residues: Protein EPD2 (549 aa).

An N-terminal signal peptide occupies residues 1–20 (MISVIKSLLTLSVLSTLAAA). The N-linked (GlcNAc...) asparagine glycan is linked to Asn41. An intrachain disulfide couples Cys82 to Cys111. 2 N-linked (GlcNAc...) asparagine glycosylation sites follow: Asn173 and Asn261. 5 disulfides stabilise this stretch: Cys224–Cys358, Cys242–Cys273, Cys381–Cys432, Cys390–Cys456, and Cys409–Cys414. N-linked (GlcNAc...) asparagine glycosylation occurs at Asn467. A disordered region spans residues 470–518 (ASTSCSAAGGRGLQSGRRSSTTRGGSSSSRSSSSSSSSSTGSGSSNAGI). The span at 484–514 (SGRRSSTTRGGSSSSRSSSSSSSSSTGSGSS) shows a compositional bias: low complexity.

Belongs to the glycosyl hydrolase 72 family.

Its subcellular location is the cell membrane. The protein is Protein EPD2 (EPD2) of Candida maltosa (Yeast).